The primary structure comprises 65 residues: UPF0434 protein RPD_0454 (65 aa).

Belongs to the UPF0434 family.

This chain is UPF0434 protein RPD_0454, found in Rhodopseudomonas palustris (strain BisB5).